Reading from the N-terminus, the 459-residue chain is MDTIAAISTPMGEGAIAIVRLSGPEAVKIADKMYKGPKGKTLSSAESHTIHYGHIADSTTGRIIEEVMVSVLRAPRTFTREDVIEINCHGGIVTVNQVLQLALREGARLAEPGEFTKRAFLNGRIDLSQAEAVMDLIRAKTDRAMNVAMNQMEGRLSALVRRLRDELLETLAHVEVNIDYPEYDDVEEMTHQLLVEKASGVKKEIEALLRTSEQGKILREGLSTVIIGRPNVGKSSLLNSLVHETKAIVTDIPGTTRDVIEEYVNVRGVPLRLVDTAGIRETEDIVERIGVERSRQVLKEADLILLVLNHSEELSEEDVKLFEAVEGMDVIVIMNKTDLEAKIDAERVKELAKGRPVVTTSLLKEEGIQDLEEAIQSLFYTGAIESGDLTYVSNTRHISILHQAKQAIDDALNGIEQDVPIDMVQIDLTRCWELLGEIIGDAVHESLIDQLFSQFCLGK.

(6S)-5-formyl-5,6,7,8-tetrahydrofolate is bound by residues Arg-20, Glu-85, and Arg-124. Residues 221–380 form the TrmE-type G domain; that stretch reads GLSTVIIGRP…LEEAIQSLFY (160 aa). Asn-231 provides a ligand contact to K(+). Residues 231 to 236, 250 to 256, and 275 to 278 contribute to the GTP site; these read NVGKSS, TDIPGTT, and DTAG. A Mg(2+)-binding site is contributed by Ser-235. Residues Thr-250, Ile-252, and Thr-255 each coordinate K(+). Thr-256 is a Mg(2+) binding site. Residue Lys-459 participates in (6S)-5-formyl-5,6,7,8-tetrahydrofolate binding.

This sequence belongs to the TRAFAC class TrmE-Era-EngA-EngB-Septin-like GTPase superfamily. TrmE GTPase family. Homodimer. Heterotetramer of two MnmE and two MnmG subunits. It depends on K(+) as a cofactor.

It localises to the cytoplasm. Exhibits a very high intrinsic GTPase hydrolysis rate. Involved in the addition of a carboxymethylaminomethyl (cmnm) group at the wobble position (U34) of certain tRNAs, forming tRNA-cmnm(5)s(2)U34. This chain is tRNA modification GTPase MnmE, found in Bacillus velezensis (strain DSM 23117 / BGSC 10A6 / LMG 26770 / FZB42) (Bacillus amyloliquefaciens subsp. plantarum).